The sequence spans 166 residues: Crossover junction endodeoxyribonuclease RuvC (166 aa).

Catalysis depends on residues D11, E70, and D142. Residues D11, E70, and D142 each coordinate Mg(2+).

Belongs to the RuvC family. As to quaternary structure, homodimer which binds Holliday junction (HJ) DNA. The HJ becomes 2-fold symmetrical on binding to RuvC with unstacked arms; it has a different conformation from HJ DNA in complex with RuvA. In the full resolvosome a probable DNA-RuvA(4)-RuvB(12)-RuvC(2) complex forms which resolves the HJ. Mg(2+) is required as a cofactor.

It is found in the cytoplasm. It carries out the reaction Endonucleolytic cleavage at a junction such as a reciprocal single-stranded crossover between two homologous DNA duplexes (Holliday junction).. In terms of biological role, the RuvA-RuvB-RuvC complex processes Holliday junction (HJ) DNA during genetic recombination and DNA repair. Endonuclease that resolves HJ intermediates. Cleaves cruciform DNA by making single-stranded nicks across the HJ at symmetrical positions within the homologous arms, yielding a 5'-phosphate and a 3'-hydroxyl group; requires a central core of homology in the junction. The consensus cleavage sequence is 5'-(A/T)TT(C/G)-3'. Cleavage occurs on the 3'-side of the TT dinucleotide at the point of strand exchange. HJ branch migration catalyzed by RuvA-RuvB allows RuvC to scan DNA until it finds its consensus sequence, where it cleaves and resolves the cruciform DNA. This chain is Crossover junction endodeoxyribonuclease RuvC, found in Nitratidesulfovibrio vulgaris (strain DP4) (Desulfovibrio vulgaris).